We begin with the raw amino-acid sequence, 136 residues long: Large ribosomal subunit protein uL16 (136 aa).

The protein belongs to the universal ribosomal protein uL16 family. Part of the 50S ribosomal subunit.

Its function is as follows. Binds 23S rRNA and is also seen to make contacts with the A and possibly P site tRNAs. The sequence is that of Large ribosomal subunit protein uL16 from Aliivibrio salmonicida (strain LFI1238) (Vibrio salmonicida (strain LFI1238)).